A 334-amino-acid polypeptide reads, in one-letter code: N-acetyl-gamma-glutamyl-phosphate reductase (334 aa).

Cysteine 154 is a catalytic residue.

It belongs to the NAGSA dehydrogenase family. Type 1 subfamily.

It is found in the cytoplasm. It catalyses the reaction N-acetyl-L-glutamate 5-semialdehyde + phosphate + NADP(+) = N-acetyl-L-glutamyl 5-phosphate + NADPH + H(+). Its pathway is amino-acid biosynthesis; L-arginine biosynthesis; N(2)-acetyl-L-ornithine from L-glutamate: step 3/4. Its function is as follows. Catalyzes the NADPH-dependent reduction of N-acetyl-5-glutamyl phosphate to yield N-acetyl-L-glutamate 5-semialdehyde. The sequence is that of N-acetyl-gamma-glutamyl-phosphate reductase from Vibrio vulnificus (strain YJ016).